The chain runs to 397 residues: Putative nickel insertion protein (397 aa).

The protein belongs to the LarC family.

In Synechococcus sp. (strain JA-2-3B'a(2-13)) (Cyanobacteria bacterium Yellowstone B-Prime), this protein is Putative nickel insertion protein.